A 248-amino-acid chain; its full sequence is Adenosylcobinamide-GDP ribazoletransferase (248 aa).

The next 6 membrane-spanning stretches (helical) occupy residues 36 to 56 (FFLP…YLGL), 59 to 79 (FLPA…ITGG), 114 to 134 (GTIA…SLVL), 137 to 157 (YSIA…FLCL), 170 to 190 (IFIG…VLVL), and 199 to 219 (ATII…LLCL).

This sequence belongs to the CobS family. Mg(2+) is required as a cofactor.

The protein localises to the cell membrane. It carries out the reaction alpha-ribazole + adenosylcob(III)inamide-GDP = adenosylcob(III)alamin + GMP + H(+). The catalysed reaction is alpha-ribazole 5'-phosphate + adenosylcob(III)inamide-GDP = adenosylcob(III)alamin 5'-phosphate + GMP + H(+). It functions in the pathway cofactor biosynthesis; adenosylcobalamin biosynthesis; adenosylcobalamin from cob(II)yrinate a,c-diamide: step 7/7. In terms of biological role, joins adenosylcobinamide-GDP and alpha-ribazole to generate adenosylcobalamin (Ado-cobalamin). Also synthesizes adenosylcobalamin 5'-phosphate from adenosylcobinamide-GDP and alpha-ribazole 5'-phosphate. This chain is Adenosylcobinamide-GDP ribazoletransferase, found in Clostridium botulinum (strain Langeland / NCTC 10281 / Type F).